The sequence spans 397 residues: Tauropine dehydrogenase (397 aa).

It belongs to the lysopine/nopaline/octopine/opine/vitopine dehydrogenases family.

It catalyses the reaction tauropine + NAD(+) + H2O = taurine + pyruvate + NADH + H(+). Subject to substrate inhibition by pyruvate for the reverse reaction but not for the forward reaction of the tauropine dehydrogenase activity. In terms of biological role, may play a role in maintaining a redox balance during environmental and functional hypoxia. Exhibits high specificity for taurine and in addition, requires both alpha amino group and C-2 carbon chain length as a critical factor for active site binding of the amino acid. A methyl group in the beta position may be critical for active site binding of the keto acid. In the reverse reaction requires NAD(H) for the activity but not NADP(H). This is Tauropine dehydrogenase from Arabella iricolor (Opal worm).